The primary structure comprises 77 residues: Sec-independent protein translocase protein TatA (77 aa).

Residues 1-21 (MGSFSIWHWLIVLVIVMLVFG) traverse the membrane as a helical segment. The segment at 50 to 77 (ADASTQQKISGGQTLEGEAREKVEKTHS) is disordered. Positions 53–62 (STQQKISGGQ) are enriched in polar residues. Over residues 66–77 (GEAREKVEKTHS) the composition is skewed to basic and acidic residues.

The protein belongs to the TatA/E family. In terms of assembly, the Tat system comprises two distinct complexes: a TatABC complex, containing multiple copies of TatA, TatB and TatC subunits, and a separate TatA complex, containing only TatA subunits. Substrates initially bind to the TatABC complex, which probably triggers association of the separate TatA complex to form the active translocon.

The protein resides in the cell inner membrane. In terms of biological role, part of the twin-arginine translocation (Tat) system that transports large folded proteins containing a characteristic twin-arginine motif in their signal peptide across membranes. TatA could form the protein-conducting channel of the Tat system. The polypeptide is Sec-independent protein translocase protein TatA (Azoarcus sp. (strain BH72)).